We begin with the raw amino-acid sequence, 763 residues long: MAP7 domain-containing protein 2 (763 aa).

Residues 1–11 (MERGGGGGFGT) are compositionally biased toward gly residues. Disordered stretches follow at residues 1–63 (MERG…KERR), 96–124 (WRKL…LREE), 149–268 (SWGA…DVGK), and 300–540 (PLRR…KQKE). Positions 52–63 (SGERQRLAKERR) are enriched in basic and acidic residues. Positions 54-147 (ERQRLAKERR…RTQQLELKKK (94 aa)) form a coiled coil. Polar residues predominate over residues 192–206 (ESTNACDKLSTSTMS). Basic and acidic residues-rich tracts occupy residues 355–371 (MPKR…EREG), 385–400 (ALEK…EKHA), and 430–540 (LAEK…KQKE).

This sequence belongs to the MAP7 family. In terms of assembly, interacts (via N-terminus) with microtubules; facilitates microtubule stabilization. Interacts with kinesin-1 family members, KIF5A, KIF5B and KIF5C.

Its subcellular location is the cytoplasm. The protein resides in the cytoskeleton. It is found in the microtubule organizing center. The protein localises to the centrosome. It localises to the midbody. Its subcellular location is the cell projection. The protein resides in the neuron projection. It is found in the axon. Its function is as follows. Microtubule-stabilizing protein involved in the control of cell motility and neurite outgrowth. Acts as a critical cofactor for kinesin transport; in the proximal axon regulates kinesin-1 family members, KIF5A, KIF5B and KIF5C recruitment to microtubules and contributes to kinesin-1-mediated transport in the axons. The chain is MAP7 domain-containing protein 2 (MAP7D2) from Pongo abelii (Sumatran orangutan).